Consider the following 632-residue polypeptide: Probable potassium transport system protein Kup 1 (632 aa).

The next 12 helical transmembrane spans lie at 17-37 (LFYL…TSPL), 60-80 (LISL…VLFL), 106-126 (TALL…DAMI), 144-164 (PSLA…LFVV), 175-195 (FFGP…ISHI), 210-230 (AVSF…AVFL), 254-274 (WFLL…ALVL), 292-312 (ALLP…QAVI), 344-364 (IFLP…VLSF), 370-390 (LATA…IMAF), 401-421 (LPVA…FLGA), and 426-446 (IHDG…VMWT).

It belongs to the HAK/KUP transporter (TC 2.A.72) family.

Its subcellular location is the cell inner membrane. It catalyses the reaction K(+)(in) + H(+)(in) = K(+)(out) + H(+)(out). In terms of biological role, transport of potassium into the cell. Likely operates as a K(+):H(+) symporter. This chain is Probable potassium transport system protein Kup 1, found in Rhizobium etli (strain ATCC 51251 / DSM 11541 / JCM 21823 / NBRC 15573 / CFN 42).